The following is a 601-amino-acid chain: DNA ligase (601 aa).

D258 contacts ATP. The active-site N6-AMP-lysine intermediate is K260. ATP contacts are provided by R265, R280, E310, F350, R427, and K433. The segment at D568–V601 is disordered.

Belongs to the ATP-dependent DNA ligase family. Requires Mg(2+) as cofactor.

The catalysed reaction is ATP + (deoxyribonucleotide)n-3'-hydroxyl + 5'-phospho-(deoxyribonucleotide)m = (deoxyribonucleotide)n+m + AMP + diphosphate.. Functionally, DNA ligase that seals nicks in double-stranded DNA during DNA replication, DNA recombination and DNA repair. The protein is DNA ligase of Saccharolobus islandicus (strain L.S.2.15 / Lassen #1) (Sulfolobus islandicus).